A 202-amino-acid polypeptide reads, in one-letter code: LexA repressor (202 aa).

Residues 28-48 constitute a DNA-binding region (H-T-H motif); the sequence is RAEIAQRLGFRSPNAAEEHLK. Residues serine 119 and lysine 156 each act as for autocatalytic cleavage activity in the active site.

This sequence belongs to the peptidase S24 family. As to quaternary structure, homodimer.

It carries out the reaction Hydrolysis of Ala-|-Gly bond in repressor LexA.. Its function is as follows. Represses a number of genes involved in the response to DNA damage (SOS response), including recA and lexA. Binds to the 16 bp palindromic sequence 5'-CTGTATATATATACAG-3'. In the presence of single-stranded DNA, RecA interacts with LexA causing an autocatalytic cleavage which disrupts the DNA-binding part of LexA, leading to derepression of the SOS regulon and eventually DNA repair. The polypeptide is LexA repressor (Edwardsiella ictaluri (strain 93-146)).